The sequence spans 214 residues: Thiopurine S-methyltransferase (214 aa).

Residues Trp10, Leu44, Glu65, and Arg122 each contribute to the S-adenosyl-L-methionine site.

Belongs to the class I-like SAM-binding methyltransferase superfamily. TPMT family.

It is found in the cytoplasm. It carries out the reaction S-adenosyl-L-methionine + a thiopurine = S-adenosyl-L-homocysteine + a thiopurine S-methylether.. In Teredinibacter turnerae (strain ATCC 39867 / T7901), this protein is Thiopurine S-methyltransferase.